A 287-amino-acid polypeptide reads, in one-letter code: Prohibitin-1 (287 aa).

Residues 102–116 form an interaction with ATG8 region; that stretch reads VLQLPAIYQNLGLDY. Positions 109–112 match the AIM motif; that stretch reads YQNL. Residues 180-224 are a coiled coil; that stretch reads EFTKAVEQKQIAQQDAERAKFLVEKAEQERQASVIRAEGEAESAE. The disordered stretch occupies residues 264–287; it reads SQHSGGGNSESSGSPNSLLLNIGR. The span at 272–287 shows a compositional bias: low complexity; that stretch reads SESSGSPNSLLLNIGR.

This sequence belongs to the prohibitin family. The mitochondrial prohibitin complex consists of two subunits (PHB1 and PHB2). The subunits assemble into a membrane-associated ring-shaped supercomplex of approximately 1 mDa. The mitochondrial prohibitin complex interacts with the m-AAA protease, a heterohexamer composed of YTA12/RCA1 and YTA10/AFG3. The mitochondrial prohibitin complex interacts with ATG8 and the interaction may support mitophagosome assembly. The N-terminus is blocked.

The protein localises to the mitochondrion inner membrane. In terms of biological role, prohibitin probably acts as a holdase/unfoldase for the stabilization of newly synthesized mitochondrial proteins. Involved in mitophagy; may act as an adapter for ATG8 that supports mitophagosome assembly. Negatively regulates the proteolytic processing of ATG32 via the i-AAA protease. Acts as a negative regulator of the m-AAA protease. This Saccharomyces cerevisiae (strain ATCC 204508 / S288c) (Baker's yeast) protein is Prohibitin-1 (PHB1).